The chain runs to 767 residues: Two-component response regulator-like PRR73 (767 aa).

Positions methionine 1–glutamate 64 are disordered. In terms of domain architecture, Response regulatory spans arginine 82 to tryptophan 200. The segment covering serine 205 to glycine 214 has biased composition (low complexity). 5 disordered regions span residues serine 205–tryptophan 272, arginine 312–threonine 388, alanine 476–valine 546, alanine 646–glycine 701, and asparagine 727–arginine 767. The span at aspartate 238–leucine 252 shows a compositional bias: acidic residues. 3 stretches are compositionally biased toward polar residues: residues aspartate 263–tryptophan 272, arginine 343–threonine 361, and cysteine 488–alanine 497. Residues glycine 518–serine 531 show a composition bias toward low complexity. A compositionally biased stretch (polar residues) spans threonine 532–arginine 543. Positions glycine 689 to serine 700 are enriched in gly residues. The CCT domain maps to arginine 712–glutamine 754. Residues asparagine 727–lysine 738 show a composition bias toward basic residues.

The protein belongs to the ARR-like family.

It localises to the nucleus. Its function is as follows. Controls photoperiodic flowering response. Seems to be one of the component of the circadian clock. Expression of several members of the ARR-like family is controlled by circadian rhythm. The particular coordinated sequential expression of PRR73, PRR37, PRR95, PRR59 and PPR1 result to circadian waves that may be at the basis of the endogenous circadian clock. The sequence is that of Two-component response regulator-like PRR73 (PRR73) from Oryza sativa subsp. indica (Rice).